Reading from the N-terminus, the 444-residue chain is MREIVLTQIGQCGNQIGAKFWEVISDEHAIDSAGTYHGDSHLQLERINVYYNEASGGRYVPRAVLVDLEPGTMDSVRSGPFGQVFRPDNFIFGQCGAGNNWAKGHYTEGAELMESVMDVVRKEAESCDCLQGFQLTHSLGGGTGSGMGTLLLSKIREEYPDRIINTFSILPSPKVSDTVVEPYNATLSVHQLIENADETFCIDNEALYDICSKTLKLPTPTYGDLNHLVSATMSGVTTCLRFPGQLNADLRKLAVNMVPFPRLHFFMPGFAPLTSRGSQQYRALTVAELTQQMFDAKNMMAACDPRHGRYLTAAAIFRGRMPMREVDEQMFNIQDKNSSYFADWLPNNVKTAVCDIPPRGLKMSATFIGNNTAIQELFKRVSEQFTAMFRRKAFLHWYTGEGMDEMEFTEAESNMNDLVSEYQQYQDATAEEEEDEEYAEEEVA.

The MREI motif motif lies at 1–4 (MREI). 6 residues coordinate GTP: Gln11, Glu69, Ser138, Gly142, Thr143, and Gly144. Glu69 provides a ligand contact to Mg(2+). At Ser172 the chain carries Phosphoserine; by CDK1. 2 residues coordinate GTP: Asn204 and Asn226. The disordered stretch occupies residues 423-444 (QQYQDATAEEEEDEEYAEEEVA). Positions 429–444 (TAEEEEDEEYAEEEVA) are enriched in acidic residues. Residue Glu436 is modified to 5-glutamyl polyglutamate.

This sequence belongs to the tubulin family. Dimer of alpha and beta chains. A typical microtubule is a hollow water-filled tube with an outer diameter of 25 nm and an inner diameter of 15 nM. Alpha-beta heterodimers associate head-to-tail to form protofilaments running lengthwise along the microtubule wall with the beta-tubulin subunit facing the microtubule plus end conferring a structural polarity. Microtubules usually have 13 protofilaments but different protofilament numbers can be found in some organisms and specialized cells. Mg(2+) is required as a cofactor. Post-translationally, some glutamate residues at the C-terminus are polyglutamylated, resulting in polyglutamate chains on the gamma-carboxyl group. Polyglutamylation plays a key role in microtubule severing by spastin (SPAST). SPAST preferentially recognizes and acts on microtubules decorated with short polyglutamate tails: severing activity by SPAST increases as the number of glutamates per tubulin rises from one to eight, but decreases beyond this glutamylation threshold. Glutamylation is also involved in cilia motility. Some glutamate residues at the C-terminus are monoglycylated but not polyglycylated due to the absence of functional TTLL10 in human. Monoglycylation is mainly limited to tubulin incorporated into cilia and flagella axonemes, which is required for their stability and maintenance. Flagella glycylation controls sperm motility. Both polyglutamylation and monoglycylation can coexist on the same protein on adjacent residues, and lowering glycylation levels increases polyglutamylation, and reciprocally. In terms of processing, phosphorylated on Ser-172 by CDK1 during the cell cycle, from metaphase to telophase, but not in interphase. This phosphorylation inhibits tubulin incorporation into microtubules. As to expression, expressed at a high level in oocytes, at different stages of development.

The protein localises to the cytoplasm. It is found in the cytoskeleton. Its subcellular location is the spindle. In terms of biological role, tubulin is the major constituent of microtubules, a cylinder consisting of laterally associated linear protofilaments composed of alpha- and beta-tubulin heterodimers. Microtubules grow by the addition of GTP-tubulin dimers to the microtubule end, where a stabilizing cap forms. Below the cap, tubulin dimers are in GDP-bound state, owing to GTPase activity of alpha-tubulin. TUBB8 has a key role in meiotic spindle assembly and oocyte maturation. The polypeptide is Tubulin beta-8 chain (Homo sapiens (Human)).